The following is a 223-amino-acid chain: Putative N-acetylmannosamine-6-phosphate 2-epimerase (223 aa).

The protein belongs to the NanE family.

The catalysed reaction is an N-acyl-D-glucosamine 6-phosphate = an N-acyl-D-mannosamine 6-phosphate. It participates in amino-sugar metabolism; N-acetylneuraminate degradation; D-fructose 6-phosphate from N-acetylneuraminate: step 3/5. Functionally, converts N-acetylmannosamine-6-phosphate (ManNAc-6-P) to N-acetylglucosamine-6-phosphate (GlcNAc-6-P). The chain is Putative N-acetylmannosamine-6-phosphate 2-epimerase from Clostridioides difficile (strain 630) (Peptoclostridium difficile).